The sequence spans 347 residues: MNTPAQKKITIVDTTLRDGMSSVSHQFTPQNVADIARGLDRAGVGTIEVAHGIGLGASSIQYGFAAATDPDYVRAAVDAVENADIAALYVPGIATLAELQKAIDAGIKTVRVAVHCTEADCGQQPVEWAKEQGLTVMTFLMMSHKLDPEPLAEQAAKLDSYGADVVYVVDSAGAMVPRHAGDRVAALRQAISADIGFHAHNNLGVGIANALTAAENGATFIDGSLRGLGASAGNAQTEVLAAAFERAGWDTGVDLFPLIDTAEHIVAPLMKEPQIVDETALILGYAGVYSTFFHPTKRAAKKFGVPARDILMELGRRGVIGGQEDMIIDVASELAGRTYEIPASAAV.

In terms of domain architecture, Pyruvate carboxyltransferase spans 9–259 (ITIVDTTLRD…DTGVDLFPLI (251 aa)). Substrate-binding positions include 17 to 18 (RD), Ser171, and His198. Asp18 lines the Mn(2+) pocket. Positions 198 and 200 each coordinate Mn(2+). Residue Tyr289 coordinates substrate.

Belongs to the 4-hydroxy-2-oxovalerate aldolase family.

The enzyme catalyses (S)-4-hydroxy-2-oxopentanoate = acetaldehyde + pyruvate. This is 4-hydroxy-2-oxovalerate aldolase 2 from Rhodococcus opacus (strain B4).